Here is a 693-residue protein sequence, read N- to C-terminus: Glycine--tRNA ligase beta subunit (693 aa).

It belongs to the class-II aminoacyl-tRNA synthetase family. As to quaternary structure, tetramer of two alpha and two beta subunits.

It is found in the cytoplasm. It carries out the reaction tRNA(Gly) + glycine + ATP = glycyl-tRNA(Gly) + AMP + diphosphate. The chain is Glycine--tRNA ligase beta subunit from Vibrio campbellii (strain ATCC BAA-1116).